Here is a 552-residue protein sequence, read N- to C-terminus: Probable beta-glucosidase btgE (552 aa).

Positions 1-18 (MRGAILATAAALAGTAMA) are cleaved as a signal peptide. Residues 250–291 (EPTSAPAAPSTTAVPATTTAAVPSTSSAAPSSSSTAPASTGA) form a disordered region. Positions 251–289 (PTSAPAAPSTTAVPATTTAAVPSTSSAAPSSSSTAPAST) are enriched in low complexity. The Proton donor role is filled by Glu392. The active-site Nucleophile is the Glu488.

It belongs to the glycosyl hydrolase 17 family.

The protein resides in the secreted. It is found in the cell wall. It carries out the reaction Hydrolysis of terminal, non-reducing beta-D-glucosyl residues with release of beta-D-glucose.. It functions in the pathway glycan metabolism; cellulose degradation. Its function is as follows. Beta-glucosidases are one of a number of cellulolytic enzymes involved in the degradation of cellulosic biomass. Catalyzes the last step releasing glucose from the inhibitory cellobiose. This Neosartorya fischeri (strain ATCC 1020 / DSM 3700 / CBS 544.65 / FGSC A1164 / JCM 1740 / NRRL 181 / WB 181) (Aspergillus fischerianus) protein is Probable beta-glucosidase btgE (btgE).